The chain runs to 198 residues: ATP-dependent Clp protease proteolytic subunit (198 aa).

The Nucleophile role is filled by S98. Residue H123 is part of the active site.

It belongs to the peptidase S14 family. Fourteen ClpP subunits assemble into 2 heptameric rings which stack back to back to give a disk-like structure with a central cavity, resembling the structure of eukaryotic proteasomes.

The protein resides in the cytoplasm. It carries out the reaction Hydrolysis of proteins to small peptides in the presence of ATP and magnesium. alpha-casein is the usual test substrate. In the absence of ATP, only oligopeptides shorter than five residues are hydrolyzed (such as succinyl-Leu-Tyr-|-NHMec, and Leu-Tyr-Leu-|-Tyr-Trp, in which cleavage of the -Tyr-|-Leu- and -Tyr-|-Trp bonds also occurs).. Its function is as follows. Cleaves peptides in various proteins in a process that requires ATP hydrolysis. Has a chymotrypsin-like activity. Plays a major role in the degradation of misfolded proteins. In Ehrlichia ruminantium (strain Welgevonden), this protein is ATP-dependent Clp protease proteolytic subunit.